The sequence spans 253 residues: Sporulation initiation inhibitor protein Soj (253 aa).

Residues lysine 11, glycine 12, glycine 13, valine 14, glycine 15, lysine 16, threonine 17, threonine 18, proline 214, and asparagine 216 each contribute to the ATP site. Threonine 17 is a Mg(2+) binding site.

The protein belongs to the ParA family. Dimerizes in the presence of ATP but not ADP; ATP-binding is required for double-stranded (ds)DNA-binding. Interacts with DnaA.

It is found in the cytoplasm. It carries out the reaction ATP + H2O = ADP + phosphate + H(+). In terms of biological role, acts as a spatially regulated molecular switch, capable of either inhibiting or activating the ability of DnaA to initiate DNA replication. Monomeric ADP-Soj inhibits oligomerization of DnaA on single-stranded (ss)- or double-stranded (ds)DNA, thus inhibiting DNA replication initiation; does not disassemble premade DnaA-DNA filaments. Decreases the residence time of DnaA on the chromosome at its binding sites (oriC, replication forks and (probably) promoter-binding sites). Soj forms nucleoprotein filaments in an ATP- and DNA-dependent manner. Inhibits the initiation of sporulation, Spo0J antagonizes this inhibition. Soj ultimately inhibits the activation (phosphorylation) of Spo0A. This Bacillus subtilis (strain 168) protein is Sporulation initiation inhibitor protein Soj.